The sequence spans 425 residues: Tyrosine--tRNA ligase (425 aa).

An L-tyrosine-binding site is contributed by Tyr34. The 'HIGH' region motif lies at 39–48 (PTADSLHVGN). Residues Tyr171 and Gln175 each contribute to the L-tyrosine site. The 'KMSKS' region signature appears at 231-235 (KYGKS). Lys234 is an ATP binding site. The S4 RNA-binding domain maps to 358–424 (APLVELLVHA…GKRTYTVVKI (67 aa)).

Belongs to the class-I aminoacyl-tRNA synthetase family. TyrS type 1 subfamily. In terms of assembly, homodimer.

It is found in the cytoplasm. The enzyme catalyses tRNA(Tyr) + L-tyrosine + ATP = L-tyrosyl-tRNA(Tyr) + AMP + diphosphate + H(+). Catalyzes the attachment of tyrosine to tRNA(Tyr) in a two-step reaction: tyrosine is first activated by ATP to form Tyr-AMP and then transferred to the acceptor end of tRNA(Tyr). The chain is Tyrosine--tRNA ligase from Opitutus terrae (strain DSM 11246 / JCM 15787 / PB90-1).